The sequence spans 302 residues: Sulfate adenylyltransferase subunit 2 (302 aa).

Residues 280-302 (RQGRVIDHDQAGSMEQKKREGYF) form a disordered region.

Belongs to the PAPS reductase family. CysD subfamily. Heterodimer composed of CysD, the smaller subunit, and CysN.

It catalyses the reaction sulfate + ATP + H(+) = adenosine 5'-phosphosulfate + diphosphate. Its pathway is sulfur metabolism; hydrogen sulfide biosynthesis; sulfite from sulfate: step 1/3. In terms of biological role, with CysN forms the ATP sulfurylase (ATPS) that catalyzes the adenylation of sulfate producing adenosine 5'-phosphosulfate (APS) and diphosphate, the first enzymatic step in sulfur assimilation pathway. APS synthesis involves the formation of a high-energy phosphoric-sulfuric acid anhydride bond driven by GTP hydrolysis by CysN coupled to ATP hydrolysis by CysD. This chain is Sulfate adenylyltransferase subunit 2, found in Hahella chejuensis (strain KCTC 2396).